The sequence spans 534 residues: CTP synthase (534 aa).

Residues 1 to 266 form an amidoligase domain region; that stretch reads MKTKFLFITG…DERIIDYLNI (266 aa). Ser-14 contacts CTP. Position 14 (Ser-14) interacts with UTP. ATP contacts are provided by residues 15–20 and Asp-72; that span reads SLGKGL. Positions 72 and 140 each coordinate Mg(2+). CTP contacts are provided by residues 147 to 149, 187 to 192, and Lys-223; these read DIE and KTKPTQ. UTP contacts are provided by residues 187–192 and Lys-223; that span reads KTKPTQ. 239-241 contributes to the ATP binding site; sequence RDV. The Glutamine amidotransferase type-1 domain occupies 291–533; the sequence is TIAIVGKYVE…VGASLKHHGE (243 aa). L-glutamine is bound at residue Gly-353. Cys-380 acts as the Nucleophile; for glutamine hydrolysis in catalysis. L-glutamine-binding positions include 381-384, Glu-404, and Arg-461; that span reads LGMQ. Active-site residues include His-506 and Glu-508.

This sequence belongs to the CTP synthase family. Homotetramer.

It catalyses the reaction UTP + L-glutamine + ATP + H2O = CTP + L-glutamate + ADP + phosphate + 2 H(+). The catalysed reaction is L-glutamine + H2O = L-glutamate + NH4(+). The enzyme catalyses UTP + NH4(+) + ATP = CTP + ADP + phosphate + 2 H(+). It participates in pyrimidine metabolism; CTP biosynthesis via de novo pathway; CTP from UDP: step 2/2. Allosterically activated by GTP, when glutamine is the substrate; GTP has no effect on the reaction when ammonia is the substrate. The allosteric effector GTP functions by stabilizing the protein conformation that binds the tetrahedral intermediate(s) formed during glutamine hydrolysis. Inhibited by the product CTP, via allosteric rather than competitive inhibition. Its function is as follows. Catalyzes the ATP-dependent amination of UTP to CTP with either L-glutamine or ammonia as the source of nitrogen. Regulates intracellular CTP levels through interactions with the four ribonucleotide triphosphates. The protein is CTP synthase of Syntrophotalea carbinolica (strain DSM 2380 / NBRC 103641 / GraBd1) (Pelobacter carbinolicus).